We begin with the raw amino-acid sequence, 321 residues long: Serine/threonine-protein phosphatase PP1 isozyme 4 (321 aa).

Alanine 2 is modified (N-acetylalanine). Aspartate 74, histidine 76, aspartate 102, and asparagine 134 together coordinate Mn(2+). Catalysis depends on histidine 135, which acts as the Proton donor. Mn(2+) contacts are provided by histidine 183 and histidine 258.

This sequence belongs to the PPP phosphatase family. PP-1 subfamily. In terms of assembly, interacts with the DELLA proteins RGA and GAI. Interacts with PIF3 and PIF5. Interacts with the auxin efflux carrier PIN1. Requires Mn(2+) as cofactor. In terms of tissue distribution, expressed in the vasculature of roots and cotyledons, tips of leaves, guard cells, bases of trichomes, pistils and stamen filaments.

It localises to the nucleus. Its subcellular location is the cytoplasm. It catalyses the reaction O-phospho-L-seryl-[protein] + H2O = L-seryl-[protein] + phosphate. The catalysed reaction is O-phospho-L-threonyl-[protein] + H2O = L-threonyl-[protein] + phosphate. With respect to regulation, phosphatase activity is strongly reduced by the protein phosphatase inhibitor 2 (I-2). Functionally, serine/threonine-protein phosphatase that possesses phosphatase activity toward para-nitrophenyl phosphate (pNPP) in vitro. Acts as a positive regulator in the gibberellin (GA) signaling pathway to regulate plant growth and development. Promotes the GA-induced and proteasomal-dependent degradation of the DELLA proteins RGA and GAI by directly binding and dephosphorylating these proteins. Involved in the regulation of phytochrome B (phyB) signaling pathway that controls photomorphogenesis. Promotes the proteasomal-dependent degradation of PIF5 factor by directly binding and dephosphorylating this protein. Involved in the regulation of pavement cell (PC) interdigitation by modulating the auxin efflux carrier PIN1 polarity and endocytic trafficking. Regulates PIN1 polar targeting through direct binding and dephosphorylation. Acts antagonistically with PID in regulating PC development. The chain is Serine/threonine-protein phosphatase PP1 isozyme 4 from Arabidopsis thaliana (Mouse-ear cress).